The sequence spans 501 residues: Bifunctional pantoate ligase/cytidylate kinase (501 aa).

Positions 1-264 are pantoate--beta-alanine ligase; that stretch reads MLSTQAELAA…CGTTRLIDHS (264 aa). 25–32 contacts ATP; it reads MGGLHQGH. Histidine 32 functions as the Proton donor in the catalytic mechanism. Glutamine 55 contacts (R)-pantoate. Position 55 (glutamine 55) interacts with beta-alanine. 144-147 is an ATP binding site; sequence GEKD. Glutamine 150 is a (R)-pantoate binding site. ATP is bound by residues valine 173 and 181–184; that span reads LSSR. Positions 265–501 are cytidylate kinase; the sequence is FLMTRQPLVA…PEEAWPTPAG (237 aa).

In the N-terminal section; belongs to the pantothenate synthetase family. The protein in the C-terminal section; belongs to the cytidylate kinase family. Type 1 subfamily.

It localises to the cytoplasm. It catalyses the reaction (R)-pantoate + beta-alanine + ATP = (R)-pantothenate + AMP + diphosphate + H(+). It carries out the reaction CMP + ATP = CDP + ADP. The enzyme catalyses dCMP + ATP = dCDP + ADP. Its pathway is cofactor biosynthesis; (R)-pantothenate biosynthesis; (R)-pantothenate from (R)-pantoate and beta-alanine: step 1/1. Catalyzes the condensation of pantoate with beta-alanine in an ATP-dependent reaction via a pantoyl-adenylate intermediate. In terms of biological role, catalyzes the transfer of a phosphate group from ATP to either CMP or dCMP to form CDP or dCDP and ADP, respectively. The chain is Bifunctional pantoate ligase/cytidylate kinase from Parasynechococcus marenigrum (strain WH8102).